A 609-amino-acid chain; its full sequence is MDSRASGTASNGETKPVYPVMEKEEEEGTLERGHWNNKMEFVLSVAGEIIGLGNVWRFPYLCYKNGGGAFFIPYLVFLFTCGVPVFLLETALGQYTSQGGVTAWRKICPIFEGIGYASQMIVILLNVYYIIVLAWALFYLFSSFTIDLPWGGCHHEWNTEHCVEFQKTNGSLNGTSENATSPVIEFWERRVLKISDGIQHLGALRWELALCLLLAWVICYFCIWKGVKSTGKVVYFTATFPYLMLVVLLIRGVTLPGAAQGIQFYLYPNLTRLWDPQVWMDAGTQIFFSFAICLGCLTALGSYNKYHNNCYRDCLALCFLNSGTSFVAGFAIFSILGFMSQEQGVPISEVAESGPGLAFIAYPRAVVMLPFSPLWACCFFFMVVLLGLDSQFVCVESLVTALVDMYPRVFRKKNRREVLILGVSVVSFLVGLVMLTEGGMYVFQLFDYYAASGMCLLFVAIFESLCVAWVYGARRFYDNIEDMIGYRPWPLIKYCWLFLTPAVCTATFLFSLIKYTPLTYNKKYTYPWWGDALGWLLALSSMVCIPAWSLYRLGTLKGPFREPPPRSLQRIRQLMCPAEDLPQRNPAGPSAPATPRTSLLRLTELESHC.

A compositionally biased stretch (polar residues) spans 1–13 (MDSRASGTASNGE). A disordered region spans residues 1–23 (MDSRASGTASNGETKPVYPVMEK). Over 1-40 (MDSRASGTASNGETKPVYPVMEKEEEEGTLERGHWNNKME) the chain is Cytoplasmic. 3 consecutive transmembrane segments (helical) span residues 41 to 61 (FVLS…FPYL), 68 to 88 (GAFF…VFLL), and 121 to 141 (IVIL…FYLF). Topologically, residues 142–206 (SSFTIDLPWG…GIQHLGALRW (65 aa)) are extracellular. Residues Cys153 and Cys162 are joined by a disulfide bond. N-linked (GlcNAc...) asparagine glycans are attached at residues Asn169 and Asn173. A run of 2 helical transmembrane segments spans residues 207 to 227 (ELAL…WKGV) and 233 to 253 (VVYF…IRGV). Asn269 carries N-linked (GlcNAc...) asparagine glycosylation. Helical transmembrane passes span 282 to 302 (AGTQ…ALGS), 319 to 339 (FLNS…LGFM), 366 to 386 (VVML…VVLL), 418 to 438 (VLIL…LTEG), 453 to 473 (GMCL…VYGA), 490 to 510 (PLIK…TFLF), and 528 to 548 (WWGD…IPAW). At 549–609 (SLYRLGTLKG…LRLTELESHC (61 aa)) the chain is on the cytoplasmic side. Thr594 carries the phosphothreonine modification. At Ser598 the chain carries Phosphoserine.

The protein belongs to the sodium:neurotransmitter symporter (SNF) (TC 2.A.22) family. SLC6A13 subfamily.

The protein localises to the cell membrane. It localises to the basolateral cell membrane. It carries out the reaction 4-aminobutanoate(out) + chloride(out) + 2 Na(+)(out) = 4-aminobutanoate(in) + chloride(in) + 2 Na(+)(in). The catalysed reaction is taurine(out) + chloride(out) + 2 Na(+)(out) = taurine(in) + chloride(in) + 2 Na(+)(in). The enzyme catalyses beta-alanine(out) + chloride(out) + 2 Na(+)(out) = beta-alanine(in) + chloride(in) + 2 Na(+)(in). It catalyses the reaction hypotaurine(out) + chloride(out) + 2 Na(+)(out) = hypotaurine(in) + chloride(in) + 2 Na(+)(in). Its function is as follows. Mediates sodium- and chloride-dependent transport of gamma-aminobutyric acid (GABA). Can also mediate transport of beta-alanine, taurine and hypotaurine. The polypeptide is Sodium- and chloride-dependent GABA transporter 2 (SLC6A13) (Macaca fascicularis (Crab-eating macaque)).